The chain runs to 533 residues: Peptide chain release factor 3 (533 aa).

Residues 10–278 (EKRRTFAIIS…TFVEIAPPPQ (269 aa)) enclose the tr-type G domain. Residues 19–26 (SHPDAGKT), 87–91 (DTPGH), and 141–144 (NKMD) contribute to the GTP site.

It belongs to the TRAFAC class translation factor GTPase superfamily. Classic translation factor GTPase family. PrfC subfamily.

Its subcellular location is the cytoplasm. Functionally, increases the formation of ribosomal termination complexes and stimulates activities of RF-1 and RF-2. It binds guanine nucleotides and has strong preference for UGA stop codons. It may interact directly with the ribosome. The stimulation of RF-1 and RF-2 is significantly reduced by GTP and GDP, but not by GMP. This chain is Peptide chain release factor 3, found in Salinibacter ruber (strain DSM 13855 / M31).